The sequence spans 527 residues: Light-independent protochlorophyllide reductase subunit B (527 aa).

[4Fe-4S] cluster is bound at residue D36. The Proton donor role is filled by D292. 428-429 (GL) is a substrate binding site.

Belongs to the ChlB/BchB/BchZ family. Protochlorophyllide reductase is composed of three subunits; BchL, BchN and BchB. Forms a heterotetramer of two BchB and two BchN subunits. [4Fe-4S] cluster is required as a cofactor.

It catalyses the reaction chlorophyllide a + oxidized 2[4Fe-4S]-[ferredoxin] + 2 ADP + 2 phosphate = protochlorophyllide a + reduced 2[4Fe-4S]-[ferredoxin] + 2 ATP + 2 H2O. It functions in the pathway porphyrin-containing compound metabolism; bacteriochlorophyll biosynthesis (light-independent). Its function is as follows. Component of the dark-operative protochlorophyllide reductase (DPOR) that uses Mg-ATP and reduced ferredoxin to reduce ring D of protochlorophyllide (Pchlide) to form chlorophyllide a (Chlide). This reaction is light-independent. The NB-protein (BchN-BchB) is the catalytic component of the complex. The polypeptide is Light-independent protochlorophyllide reductase subunit B (Chlorobium phaeovibrioides (strain DSM 265 / 1930) (Prosthecochloris vibrioformis (strain DSM 265))).